Reading from the N-terminus, the 246-residue chain is Polyhedrin (246 aa).

Belongs to the polyhedrin family.

Its function is as follows. Major component of the virus occlusion bodies, which are large proteinaceous structures (polyhedra), that protect the virus from the outside environment for extended periods until they are ingested by insect larvae. The polypeptide is Polyhedrin (PH) (Spodoptera exigua nuclear polyhedrosis virus (strain US) (SeMNPV)).